Reading from the N-terminus, the 944-residue chain is Thyroid peroxidase (944 aa).

Residues 1 to 30 form the signal peptide; it reads MVGLVPAGSAWGGRALAVLGVTLLVALARG. Residues 31 to 858 are Extracellular-facing; it reads LLPFFLGGRD…SGRLPKASLV (828 aa). N-linked (GlcNAc...) asparagine glycosylation is present at asparagine 141. The cysteines at positions 154 and 170 are disulfide-linked. Position 250 (aspartate 250) interacts with heme b. The Proton acceptor role is filled by histidine 251. Aspartate 252 contacts Ca(2+). Intrachain disulfides connect cysteine 271/cysteine 281 and cysteine 275/cysteine 295. Asparagine 316 carries an N-linked (GlcNAc...) asparagine glycan. Residues threonine 330, phenylalanine 332, aspartate 334, and serine 336 each coordinate Ca(2+). Asparagine 351 carries N-linked (GlcNAc...) asparagine glycosylation. Residues glutamate 408 and histidine 503 each contribute to the heme b site. Intrachain disulfides connect cysteine 606–cysteine 663, cysteine 704–cysteine 729, cysteine 750–cysteine 790, cysteine 776–cysteine 802, cysteine 808–cysteine 822, cysteine 816–cysteine 831, and cysteine 833–cysteine 846. Asparagine 623 is a glycosylation site (N-linked (GlcNAc...) asparagine). The region spanning 748–804 is the Sushi domain; the sequence is DACGLPDSLDNGDVVLCGEAGRRVLVFSCRHGFKLQGPEQVACSPRGGAVRAPVCRD. Residues 804 to 847 form the EGF-like; calcium-binding domain; sequence DINECEDASHPPCHGSARCRNTKGGFRCECTDPAVLGEDGTTCV. A helical transmembrane segment spans residues 859–879; sequence SIALGIVLVVGLAGLTWTLVC. The Cytoplasmic segment spans residues 880–944; it reads RWAHAGRKAS…RSHVAQGSPA (65 aa). Residues 895–944 are disordered; it reads LGGRGAPPPGRGAGQDGASGSLVPPLGPQGRTRAVDPTSSRSHVAQGSPA. Residues 931 to 944 are compositionally biased toward polar residues; the sequence is PTSSRSHVAQGSPA.

It belongs to the peroxidase family. XPO subfamily. As to quaternary structure, interacts with DUOX1, DUOX2 and CYBA. Requires Ca(2+) as cofactor. The cofactor is heme b. Post-translationally, heme is covalently bound through a H(2)O(2)-dependent autocatalytic process. Heme insertion is important for the delivery of protein at the cell surface. Cleaved in its N-terminal part.

It localises to the membrane. It catalyses the reaction 2 iodide + H2O2 + 2 H(+) = diiodine + 2 H2O. The enzyme catalyses [thyroglobulin]-L-tyrosine + iodide + H2O2 + H(+) = [thyroglobulin]-3-iodo-L-tyrosine + 2 H2O. It carries out the reaction [thyroglobulin]-3-iodo-L-tyrosine + iodide + H2O2 + H(+) = [thyroglobulin]-3,5-diiodo-L-tyrosine + 2 H2O. The catalysed reaction is 2 [thyroglobulin]-3,5-diiodo-L-tyrosine + H2O2 = [thyroglobulin]-L-thyroxine + [thyroglobulin]-dehydroalanine + 2 H2O. It catalyses the reaction [thyroglobulin]-3-iodo-L-tyrosine + [thyroglobulin]-3,5-diiodo-L-tyrosine + H2O2 = [thyroglobulin]-3,3',5-triiodo-L-thyronine + [thyroglobulin]-dehydroalanine + 2 H2O. Its pathway is hormone biosynthesis; thyroid hormone biosynthesis. Iodination and coupling of the hormonogenic tyrosines in thyroglobulin to yield the thyroid hormones T(3) and T(4). The chain is Thyroid peroxidase (TPO) from Canis lupus familiaris (Dog).